Reading from the N-terminus, the 171-residue chain is Co-chaperone protein HscB homolog (171 aa).

Residues 2 to 74 (NHFELFRLPF…ISRAEYMLSE (73 aa)) enclose the J domain.

Belongs to the HscB family. In terms of assembly, interacts with HscA and stimulates its ATPase activity.

Its function is as follows. Co-chaperone involved in the maturation of iron-sulfur cluster-containing proteins. Seems to help targeting proteins to be folded toward HscA. The sequence is that of Co-chaperone protein HscB homolog from Photobacterium profundum (strain SS9).